Here is a 172-residue protein sequence, read N- to C-terminus: MCWRLLCVTEKTATILGSLRQFHLKIATDIVFDESQQNLICYDISNGMCACGIIQNTDHVEADQNLLAQTIKKWRRKGLSEPAIQRRLHDKEKQLAHKRSQQVEDYAGILDKWLKERTSPVYLLWYWQDKNQQSIRFTLPNRIIRETHQIPENTWVRYHVDEIKKNIVEENK.

This is an uncharacterized protein from Pasteurella multocida (strain Pm70).